An 86-amino-acid chain; its full sequence is Small ribosomal subunit protein uS17 (86 aa).

Belongs to the universal ribosomal protein uS17 family. Part of the 30S ribosomal subunit.

Its function is as follows. One of the primary rRNA binding proteins, it binds specifically to the 5'-end of 16S ribosomal RNA. The polypeptide is Small ribosomal subunit protein uS17 (Streptococcus equi subsp. equi (strain 4047)).